A 417-amino-acid polypeptide reads, in one-letter code: uncharacterized protein (417 aa).

10 helical membrane passes run 21–41 (ISSLGDWLHILAVLTLAAFQL), 50–70 (LLMMSFALPVIVLGPVSGLLA), 88–108 (LTVISCVYVSELWQLYVLLSV), 166–186 (SVFYINAGAFFLSAVILFFLP), 217–237 (MPLLLTGLLTACVVLFVLQIG), 255–275 (LAGWCMAVSGAGMLLTAAITG), 283–303 (LLYFSAGTLLLGLATGGAPFL), 308–328 (IAGITLFIFAFFIMGAAFGLV), 351–371 (AIQSATTLASILGMAGGGVLA), and 373–393 (WIGVSLAFLVCGCLLIMIGLI).

The protein belongs to the major facilitator superfamily. TCR/Tet family.

It is found in the cell membrane. This is an uncharacterized protein from Bacillus subtilis (strain 168).